We begin with the raw amino-acid sequence, 807 residues long: Mechanosensitive cation channel TMEM63A (807 aa).

Residues 1–51 (MMDSPFLELWQSKAVSIREQLGLGDRPNDSYCYNSAKNSTVLQGVTFGGIP) lie on the Extracellular side of the membrane. Asn38 carries N-linked (GlcNAc...) asparagine glycosylation. A helical transmembrane segment spans residues 52-74 (TVLLIDVSCFLFLILVFSIIRRR). Topologically, residues 75–134 (FWDYGRIALVSEADSESRFQRLSSTSSSGQQDFENELGCCPWLTAIFRLHDDQILEWCGE) are cytoplasmic. The helical transmembrane segment at 135–167 (DAIHYLSFQRHIIFLLVVVSFLSLCVILPVNLS) threads the bilayer. Residues 168–191 (GDLLDKDPYSFGRTTIANLQTDND) are Extracellular-facing. The chain crosses the membrane as a helical span at residues 192-217 (LLWLHTIFAVIYLFLTVGFMRHHTQS). Residues 218 to 416 (IKYKEENLVR…CWKNLSIQGL (199 aa)) are Cytoplasmic-facing. An intracellular linker IL2; confers mechanosensitivity region spans residues 219 to 414 (KYKEENLVRR…DICWKNLSIQ (196 aa)). The helical transmembrane segment at 417–444 (RWWLQWLGINFTLFLGLFFLTTPSIILS) threads the bilayer. The Extracellular portion of the chain corresponds to 445–462 (TMDKFNVTKPIHALNNPI). An N-linked (GlcNAc...) asparagine glycan is attached at Asn450. The chain crosses the membrane as a helical span at residues 463–490 (ISQFFPTLLLWSFSALLPSIVYYSTLLE). The Cytoplasmic segment spans residues 491-495 (SHWTK). The helical transmembrane segment at 496–532 (SGENQIMMTKVYIFLIFMVLILPSLGLTSLDFFFRWL) threads the bilayer. Residues 533–554 (FDKTSSEASIRLECVFLPDQGA) lie on the Extracellular side of the membrane. The chain crosses the membrane as a helical span at residues 555–586 (FFVNYVIASAFIGNGMELLRLPGLILYTFRMI). Positions 555-586 (FFVNYVIASAFIGNGMELLRLPGLILYTFRMI) are gating helix. At 587–606 (MAKTAADRRNVKQNQAFQYE) the chain is on the cytoplasmic side. A helical transmembrane segment spans residues 607 to 624 (FGAMYAWMLCVFTVIVAY). The Extracellular portion of the chain corresponds to 625–628 (SITC). Residues 629–651 (PIIAPFGLIYILLKHMVDRHNLY) traverse the membrane as a helical segment. At 652 to 661 (FVYLPAKLEK) the chain is on the cytoplasmic side. Residues 662 to 689 (GIHFAAVNQALAAPILCLFWLYFFSFLR) traverse the membrane as a helical segment. The Extracellular segment spans residues 690-694 (LGMKA). A helical transmembrane segment spans residues 695–709 (PATLFTFLVLLLTIL). Residues 710-807 (VCLAHTCFGC…GSVAAAPQEA (98 aa)) are Cytoplasmic-facing. Position 739 is a phosphoserine (Ser739).

It belongs to the CSC1 (TC 1.A.17) family. Monomer. Post-translationally, N-Glycosylated.

It is found in the lysosome membrane. Its subcellular location is the early endosome membrane. The protein resides in the cell membrane. The enzyme catalyses Ca(2+)(in) = Ca(2+)(out). In terms of biological role, mechanosensitive cation channel with low conductance and high activation threshold. In contrast to TMEM63B, does not show phospholipid scramblase activity. Acts as a regulator of lysosomal morphology by mediating lysosomal mechanosensitivity. Important for the baby's first breath and respiration throughout life. Upon lung inflation conducts cation currents in alveolar type 1 and 2 cells triggering lamellar body exocytosis and surfactant secretion into airspace. Also acts as an osmosensitive cation channel preferentially activated by hypotonic stress. The sequence is that of Mechanosensitive cation channel TMEM63A from Homo sapiens (Human).